We begin with the raw amino-acid sequence, 379 residues long: Protein RecA (379 aa).

79 to 86 (GPESSGKT) provides a ligand contact to ATP.

Belongs to the RecA family.

It localises to the cytoplasm. Functionally, can catalyze the hydrolysis of ATP in the presence of single-stranded DNA, the ATP-dependent uptake of single-stranded DNA by duplex DNA, and the ATP-dependent hybridization of homologous single-stranded DNAs. It interacts with LexA causing its activation and leading to its autocatalytic cleavage. This Streptococcus thermophilus protein is Protein RecA.